The sequence spans 83 residues: Apolipoprotein C-I (83 aa).

Positions 1-26 are cleaved as a signal peptide; sequence MRLILSLPVLAVVLAMVLEGPAPAQA.

This sequence belongs to the apolipoprotein C1 family.

It is found in the secreted. Its function is as follows. Inhibitor of lipoprotein binding to the low density lipoprotein (LDL) receptor, LDL receptor-related protein, and very low density lipoprotein (VLDL) receptor. Associates with high density lipoproteins (HDL) and the triacylglycerol-rich lipoproteins in the plasma and makes up about 10% of the protein of the VLDL and 2% of that of HDL. Appears to interfere directly with fatty acid uptake and is also the major plasma inhibitor of cholesteryl ester transfer protein (CETP). Binds free fatty acids and reduces their intracellular esterification. Modulates the interaction of APOE with beta-migrating VLDL and inhibits binding of beta-VLDL to the LDL receptor-related protein. The polypeptide is Apolipoprotein C-I (APOC1) (Rousettus aegyptiacus (Egyptian fruit bat)).